The sequence spans 464 residues: Cysteine--tRNA ligase (464 aa).

Residue cysteine 27 coordinates Zn(2+). The 'HIGH' region motif lies at 29–39; the sequence is PTVYNFFHIGN. Zn(2+) is bound by residues cysteine 207, histidine 232, and glutamate 236. A 'KMSKS' region motif is present at residues 264–268; it reads KMSKS. Lysine 267 serves as a coordination point for ATP.

Belongs to the class-I aminoacyl-tRNA synthetase family. As to quaternary structure, monomer. Zn(2+) is required as a cofactor.

Its subcellular location is the cytoplasm. The enzyme catalyses tRNA(Cys) + L-cysteine + ATP = L-cysteinyl-tRNA(Cys) + AMP + diphosphate. This chain is Cysteine--tRNA ligase, found in Clostridium acetobutylicum (strain ATCC 824 / DSM 792 / JCM 1419 / IAM 19013 / LMG 5710 / NBRC 13948 / NRRL B-527 / VKM B-1787 / 2291 / W).